A 327-amino-acid polypeptide reads, in one-letter code: Putative HTH-type transcriptional regulatory protein MM_0444 (327 aa).

One can recognise an HTH cro/C1-type domain in the interval 132 to 190 (LKKARTTQSMSLGTLASMVGVSRRTISKYEEEGMDASIDVVLHLEDIFGVELAKPIDIL). The segment at residues 143–162 (LGTLASMVGVSRRTISKYEE) is a DNA-binding region (H-T-H motif). Residues 195 to 214 (SRKPRKKAEPEKEEPKGKPG) are disordered. Residues 201 to 211 (KAEPEKEEPKG) show a composition bias toward basic and acidic residues.

In Methanosarcina mazei (strain ATCC BAA-159 / DSM 3647 / Goe1 / Go1 / JCM 11833 / OCM 88) (Methanosarcina frisia), this protein is Putative HTH-type transcriptional regulatory protein MM_0444.